The following is a 283-amino-acid chain: 1-deoxypentalenic acid 11-beta-hydroxylase (283 aa).

Arg117 is a substrate binding site. Fe cation-binding residues include His135 and Asp137. 2-oxoglutarate-binding positions include 135 to 137 and Trp151; that span reads HQD. Arg186 is a binding site for substrate. Residue His224 coordinates Fe cation. Positions 226 and 238 each coordinate 2-oxoglutarate. The tract at residues 251-283 is disordered; that stretch reads HRGFNALTPWPESAKDASKGIMSKITGTPTTAE.

It belongs to the PhyH family. It depends on Fe cation as a cofactor. The cofactor is L-ascorbate.

The enzyme catalyses 1-deoxypentalenate + 2-oxoglutarate + O2 = 1-deoxy-11beta-hydroxypentalenate + succinate + CO2. It participates in antibiotic biosynthesis; pentalenolactone biosynthesis. Catalyzes the conversion of 1-deoxypentalenic acid to 11-beta-hydroxy-1-deoxypentalenic acid in the biosynthesis of pentalenolactone antibiotic. This is 1-deoxypentalenic acid 11-beta-hydroxylase (pntH) from Streptomyces arenae.